Reading from the N-terminus, the 219-residue chain is Uracil-DNA glycosylase (219 aa).

Asp-61 (proton acceptor) is an active-site residue.

It belongs to the uracil-DNA glycosylase (UDG) superfamily. UNG family.

The protein resides in the cytoplasm. The enzyme catalyses Hydrolyzes single-stranded DNA or mismatched double-stranded DNA and polynucleotides, releasing free uracil.. Functionally, excises uracil residues from the DNA which can arise as a result of misincorporation of dUMP residues by DNA polymerase or due to deamination of cytosine. The polypeptide is Uracil-DNA glycosylase (Neisseria meningitidis serogroup B (strain ATCC BAA-335 / MC58)).